A 294-amino-acid polypeptide reads, in one-letter code: MNSGVVTIIGRPSAGKSTFLNTASGEKVSIVSAIPQTTRNAIRGIVNTTKGQIVFIDTPGYHKSEKKLNLKLQEIAKTRLEEGDAVLYLIDLSREFGEEEKNICSLLIPLQNKTVIGLNKADLKSSKADLVKKELLSLLPDIPQERIFEISALKDEGINEILSLLIELLPEGEALYPEDIYTDQDVVFRITEIIREQAILHTREEIPHALYAGVEDAEMHKNGKELWVRAFLYVEKESQKAMLIGKGAAVIKSIRIKSMAELRKIFPYKVQLDLQVRVNKNWRQKDNIIKKISY.

The region spanning 2-171 (NSGVVTIIGR…LSLLIELLPE (170 aa)) is the Era-type G domain. The interval 10-17 (GRPSAGKS) is G1. Position 10-17 (10-17 (GRPSAGKS)) interacts with GTP. The segment at 36 to 40 (QTTRN) is G2. A G3 region spans residues 57–60 (DTPG). Residues 57-61 (DTPGY) and 119-122 (NKAD) each bind GTP. The interval 119–122 (NKAD) is G4. The interval 150–152 (ISA) is G5. The 79-residue stretch at 202–280 (TREEIPHALY…QLDLQVRVNK (79 aa)) folds into the KH type-2 domain.

This sequence belongs to the TRAFAC class TrmE-Era-EngA-EngB-Septin-like GTPase superfamily. Era GTPase family. As to quaternary structure, monomer.

Its subcellular location is the cytoplasm. It is found in the cell inner membrane. In terms of biological role, an essential GTPase that binds both GDP and GTP, with rapid nucleotide exchange. Plays a role in 16S rRNA processing and 30S ribosomal subunit biogenesis and possibly also in cell cycle regulation and energy metabolism. In Treponema denticola (strain ATCC 35405 / DSM 14222 / CIP 103919 / JCM 8153 / KCTC 15104), this protein is GTPase Era.